The following is a 182-amino-acid chain: Protein GrpE (182 aa).

The disordered stretch occupies residues 1-35 (MTQENQTPPPEQENLAADPAVETTAETPAVKTPEQ).

It belongs to the GrpE family. In terms of assembly, homodimer.

It is found in the cytoplasm. Participates actively in the response to hyperosmotic and heat shock by preventing the aggregation of stress-denatured proteins, in association with DnaK and GrpE. It is the nucleotide exchange factor for DnaK and may function as a thermosensor. Unfolded proteins bind initially to DnaJ; upon interaction with the DnaJ-bound protein, DnaK hydrolyzes its bound ATP, resulting in the formation of a stable complex. GrpE releases ADP from DnaK; ATP binding to DnaK triggers the release of the substrate protein, thus completing the reaction cycle. Several rounds of ATP-dependent interactions between DnaJ, DnaK and GrpE are required for fully efficient folding. The protein is Protein GrpE of Polynucleobacter necessarius subsp. necessarius (strain STIR1).